The chain runs to 308 residues: Ribosomal RNA large subunit methyltransferase F (308 aa).

Belongs to the methyltransferase superfamily. METTL16/RlmF family.

The protein localises to the cytoplasm. The catalysed reaction is adenosine(1618) in 23S rRNA + S-adenosyl-L-methionine = N(6)-methyladenosine(1618) in 23S rRNA + S-adenosyl-L-homocysteine + H(+). Specifically methylates the adenine in position 1618 of 23S rRNA. The protein is Ribosomal RNA large subunit methyltransferase F of Salmonella schwarzengrund (strain CVM19633).